A 311-amino-acid polypeptide reads, in one-letter code: Malate dehydrogenase (311 aa).

Residues 7-13 (GAAGGIG) and Asp-34 contribute to the NAD(+) site. Substrate-binding residues include Arg-81 and Arg-87. NAD(+) contacts are provided by residues Asn-94 and 117–119 (ITN). Substrate-binding residues include Asn-119 and Arg-153. Catalysis depends on His-177, which acts as the Proton acceptor. Position 227 (Met-227) interacts with NAD(+).

This sequence belongs to the LDH/MDH superfamily. MDH type 1 family. Homodimer.

It catalyses the reaction (S)-malate + NAD(+) = oxaloacetate + NADH + H(+). Its function is as follows. Catalyzes the reversible oxidation of malate to oxaloacetate. The protein is Malate dehydrogenase of Histophilus somni (strain 129Pt) (Haemophilus somnus).